Here is a 595-residue protein sequence, read N- to C-terminus: MQIIEIREPEQADFKQERQIAVGIDFGTTNSLIAIAANRQVKVIKSIDDKELIPTTIDFTSNNFTIGNNKGLRSIKRLFGKTLKEILNTPALFSLVKDYLDVNSSELKLNFANKQLRVPEIAAEIFIYLKNQAEEQLKTNLTKAVITVPAHFNDAARGEVMLAAKIAGFEVLRLIAEPTAAAYAYGLNKNQKGCYLVYDLGGGTFDVSILNIQEGIFQVIATNGDNMLGGNDIDVVITQYLCNKFDLPNSIDTLQLAKKAKETLTYKDSFNNDNVSINKQILEQLILPLVERTINIAQECLEQAGNPNIDGVILVGGATRIPLIKDELYKAFKIDILSDIDPDKAVVWGAALQAENLIAPHTNSLLIDVAPLSLGMELYGGIVEKIIMHNTPIPISVVKEFTTYVDNQTGIQFHILQGEREMAADCRSLARFELKGLPPMKAGYIRAEVTFSIDADGILSVSAYEKISNTSHAIEVKPNHGIDKTEIDIMLENAYKNAKIDYTTRLLQEAVIEAEALIFSIERAIAELTILSSESEISIINSLLDNIKEAVHARDWILINNSIKEFKSKIKKSIDTKFNIIINDLLKGKNINQIK.

It belongs to the heat shock protein 70 family.

In terms of biological role, chaperone involved in the maturation of iron-sulfur cluster-containing proteins. Has a low intrinsic ATPase activity which is markedly stimulated by HscB. The polypeptide is Chaperone protein HscA homolog (Rickettsia conorii (strain ATCC VR-613 / Malish 7)).